The sequence spans 2230 residues: MPTRQPSKYGNKFRSSSASFKPKRTKTVEFSSLRSTEATSQDEKFEAIRLANSIDEALGFPRFESGEKRVGWLINMHSTSIEDPNVPGGRAGVDYYFLEDGGGSFKATVEYDPYFLLAVKKGHEAEVEEWCRRMFEGLIKTIKRVEKEDLQLPNHLLGHRRTFLQLNFANVSHLLDVRKTLLPLAEKNKKNVNVMDTYAEISSANAGFDLFDDELINESRPNSNMNASDYIIDIREYDVPYHVRVAIDKDIRIGKWYTVEAKHGVISLTCLEERLQRADPVILAFDIETTKLPLKFPDSVIDQIMMISYMIDGQGFLITNREIVSEDIRDFEYTPKPEYSGPFMIFNEPNERSVIERFFEHIKEAKPTVIATYNGDFFDWPFVEARASVLGIDMYKEIGFRKNSEDIYQSDHCVHMDCFAWVNRDSYLPQGSRGLKAVTVAKLGYDPDELDPELMTPYASERPQTLAEYSVSDAVATYYLYMKYVHPFIFSLCTIIPLNPDDTLRKGTGTLCEMLLMVQAYKGEIVLPNKHKDPPESFYEGHLLESETYVGGHVESIEAGVFRSDIPVTFNIDTTAIDELLRDLDAALKFSIEVEEKKSMDDVVNYEDVKAQIAERLVNLREKPHRDEVPSIYHLDVASMYPNIMITNRLQPDSMIQESDCAACDFNRPGKTCDRRLPWAWRGEFLPAKRDEYNMIRQAVANELFPGRTKNSPMRSFGEMSAEEQAAIIKKRLQDYSKKIYHKIHDSKTIVREAIICQRENPFYVDTVRSFRDRRYDFKGKQKVWKGKTEALKAAGASAAEIEEAKKMIVLFDSLQLAHKVILNSFYGYVMRKGSRWYSMEMAGVTCLTGAHIIQMARELVERIGRPLELDTDGIWCMLPGSFPEDFSFTLKNGKKLGISYPCVMLNHLVHGKYTNHQYQTLVDPKTFRYETHSDNSIFFEVDGPYKAMILPTSKEEDKNLKKRYAVFNHDGSLAELKGFEVKRRGELKLIKIFQTQIFRFFLEGSTLEETYAAVARVADRWLDVLYDHGATLADEELIELISENRSMTKTLEEYGNQKSTSITTARRLAEFLGEQMVKDKGLNCKYIISAKPKNTPVTERAIPVTIFSAEEPVKRFFLRKWLKDDPGDMDPRSVIDWDYYLERLGSVVQKLITIPAALQKVRNPVPRVAHPDWLQRRINMKEDKFKQTKMTDMFGKTEKNPLSNISTNILDHRVQHHGDIGEAVANSTQKLKSSPNGKISQKRKHPEGLTKTLLDPFASLPAIMPSLNDDYVGFLKYQKQKWKIQKQARARRRQLFGERVNVATDSLSNLFRNQAELLYINTWQILQLCETGRPGLVRAFVLIDRKIHALTIKVPRQIYVNLKRDSLPDVDVPDCEVEKVNHTLPNGHPSVHLFKLTLSEDTYLRETDKIDALLQHPSIEGVYEKNIPLSVRAVLKLGSVCTFDEEQRGVLGEGLDRGFNLSTLCHTTPDEPYLLNSPLVYHYLYHVLSGDRQIFALFSTTKSEAHIVILNRTRDVQGLPNVDKIYAELRARTMENMGGDQSQNAFEYQEKIHFKTTQVTTRRKAYLEIGDLIKKLKGEETQPVIMVIQSHQRHRLCHDIPILKEYPVLPVKPEVSDMDLPPLGWQSFIAKRLVTHYLYLASWIHHLTMLARYGDVPLCNLENDDPRYLIDISYARRLQQNNVVLWWSNGPRPDHAGYEKDDVTGSLERVSMPSVNVPSAYNTVCIELEVRNLSINTILTSSIINELEGADTLLASSEPSADANGSGVLYSEKAFASAGAVVLREMVKHWWSEACEGNNMADIMVQHLIRWVESPVSCLYDRSLHDYVRMLSRKSFQRLMAEFRRVGSNVIFASPTRLLLQTTKTEVGNAYAYSQYVLKSIRANASFHFIDLEIKEYWDYLVWYDEYNYGGKGCRKVTGSEDQELETVMHWQLSRFLPAPMQTIFHDWVVEYIELMHGLKRTDSDDSSTPRLTQLPVGNHNEDNDEITSILAEKFSKPLKKQISGLIRRQRDELLHPELASDYVFPVLPGVLVDPNNDKRNPVLELVKLLMQVLSLSKTTTLETRLLRRELLAMFEVREFSKEGRFENPGASLKLPELSCNACCLIRDLDLCRDEDVLPEMGSDPNKAAPKPWRCPFCQTEYDRLAQEEALIGQVQGLIVGWQTQDLKCSKCGGLKISDFMEHCSCSGHWVETMDRNEVEKKLLLLSSVSKFHGLKLLESVVQGVLEQM.

Residues 1–19 (MPTRQPSKYGNKFRSSSAS) show a composition bias toward polar residues. The interval 1 to 24 (MPTRQPSKYGNKFRSSSASFKPKR) is disordered. Zn(2+) is bound by residues C2101, C2104, C2136, and C2139. The segment at 2101-2139 (CNACCLIRDLDLCRDEDVLPEMGSDPNKAAPKPWRCPFC) adopts a CysA-type zinc-finger fold. 4 residues coordinate [4Fe-4S] cluster: C2170, C2173, C2185, and C2187. The CysB motif motif lies at 2170 to 2187 (CSKCGGLKISDFMEHCSC).

It belongs to the DNA polymerase type-B family. Heterotetramer. Consists of 4 subunits: pol2, dpb2, dpb3 and dpb4. The cofactor is [4Fe-4S] cluster.

It is found in the nucleus. The enzyme catalyses DNA(n) + a 2'-deoxyribonucleoside 5'-triphosphate = DNA(n+1) + diphosphate. Functionally, DNA polymerase II participates in chromosomal DNA replication. In Aspergillus fumigatus (strain ATCC MYA-4609 / CBS 101355 / FGSC A1100 / Af293) (Neosartorya fumigata), this protein is DNA polymerase epsilon catalytic subunit A (pol2).